The chain runs to 880 residues: Valine--tRNA ligase (880 aa).

The 'HIGH' region signature appears at 46-56 (PNVTGKLHLGH). The 'KMSKS' region signature appears at 520–524 (KMSKS). ATP is bound at residue K523. Positions 808 to 880 (LAGLINIEEE…KARIAELKEN (73 aa)) form a coiled coil.

This sequence belongs to the class-I aminoacyl-tRNA synthetase family. ValS type 1 subfamily. In terms of assembly, monomer.

It is found in the cytoplasm. The catalysed reaction is tRNA(Val) + L-valine + ATP = L-valyl-tRNA(Val) + AMP + diphosphate. In terms of biological role, catalyzes the attachment of valine to tRNA(Val). As ValRS can inadvertently accommodate and process structurally similar amino acids such as threonine, to avoid such errors, it has a 'posttransfer' editing activity that hydrolyzes mischarged Thr-tRNA(Val) in a tRNA-dependent manner. This chain is Valine--tRNA ligase, found in Lactococcus lactis subsp. lactis (strain IL1403) (Streptococcus lactis).